The following is a 476-amino-acid chain: MDMEVDEAISGTSSSRLAPIEEVKPTPKQIKRIAAHSHVKGLGIDTETQEAHYEAAGFVGQAPARTAASIVVDMIRLKCMAGRAVLIAGPPATGKTAIALAMSQELGDGVPFVPLVASEVFSNEVKKTEVLMRSFRRAIGLRVKETKDVYEGEVTELSPVEASDNSGMGKTISHLVLSLKTAKGSKQLKLDPSIYDSILKQRVEVGDVIYIEANSGIVKRVGRCDVYASEFDLEADEFVPMPKGDVRKSKDIVQNVSLHDLDIANARPQGRQGDVSNIVSQLMTPKKTEVTDRLRSEINKVVNEYIESGVAELMPGVLFIDEVHMLDVECFTYLYRALESPMAPVVVFATNRGTTTVRGLGDKAPHGIPPEMLDRLMIIPTMKYNEEDIRKILVHRTEAENVQFEEKAFDLLSKVGAEKSLRYALQLIAPARLCAQTCGREVIEVEDVDRCTKLFMDRGESLKKAEEEMRQPKNKK.

The disordered stretch occupies residues Met-1–Val-23. Gly-89–Thr-96 is an ATP binding site.

The protein belongs to the RuvB family. In terms of assembly, forms homohexameric rings. May form a dodecamer with ruvb-2 made of two stacked hexameric rings. Expressed in gonadal cells.

It localises to the cytoplasm. Its subcellular location is the nucleus. It carries out the reaction ATP + H2O = ADP + phosphate + H(+). Its function is as follows. Possesses single-stranded DNA-stimulated ATPase and ATP dependent DNA helicase (3' to 5') activity suggesting a role in nuclear processes such as recombination and transcription. May participate in several chromatin remodeling complexes that mediate the ATP-dependent exchange of histones and remodel chromatin by shifting nucleosomes. Involvement in these complexes is likely required for transcriptional activation of selected genes and DNA repair in response to DNA damage. Involved in the Ce-Tor signaling pathway whereby it is required for the accumulation and localization of box C/D snoRNP to nucleoli to regulate ribosomal maturation and thus protein synthesis. Antagonizes the transcriptional activity of transcription factor pha-4, to control postembryonic development and adult longevity. Has a role in pharyngeal development. Has a role in gonadal development. The sequence is that of RuvB-like 1 from Caenorhabditis elegans.